A 310-amino-acid chain; its full sequence is Olfactory receptor 1496 (310 aa).

Topologically, residues 1 to 23 are extracellular; it reads MNNQTFITQFLLLGLPIPEEHQH. The N-linked (GlcNAc...) asparagine glycan is linked to Asn3. Residues 24-48 traverse the membrane as a helical segment; the sequence is LFYALFLVMYLTTILGNLLIIVLVQ. The Cytoplasmic portion of the chain corresponds to 49–55; sequence LDSQLHT. Residues 56–77 traverse the membrane as a helical segment; sequence PMYLFLSNLSFSDLCFSSVTMP. Residues 78–98 lie on the Extracellular side of the membrane; the sequence is KLLQNMRSQDTSIPYGGCLAQ. Cys95 and Cys187 form a disulfide bridge. A helical transmembrane segment spans residues 99–118; the sequence is TYFFMVFGDMESFLLVAMAY. Residues 119-137 lie on the Cytoplasmic side of the membrane; the sequence is DRYVAICFPLHYTSIMSPK. Residues 138–156 traverse the membrane as a helical segment; that stretch reads LCTCLVLLLWMLTTSHAMM. The Extracellular portion of the chain corresponds to 157-194; sequence HTLLAARLSFCENNVVLNFFCDLFVLLKLACSDTYINE. The chain crosses the membrane as a helical span at residues 195 to 217; the sequence is LMIFIMSTLLIIIPFFLIVMSYA. Over 218 to 234 the chain is Cytoplasmic; that stretch reads RIISSILKVPSTQGICK. A helical transmembrane segment spans residues 235 to 258; that stretch reads VFSTCGSHLSVVSLFYGTIIGLYL. Residues 259-270 lie on the Extracellular side of the membrane; sequence CPAGNNSTVKEM. Residues 271–290 traverse the membrane as a helical segment; it reads VMAMMYTVVTPMLNPFIYSL. Topologically, residues 291-310 are cytoplasmic; that stretch reads RNRDMKRALIRVICSMKITL.

This sequence belongs to the G-protein coupled receptor 1 family. Olfactory epithelium.

The protein localises to the cell membrane. In terms of biological role, odorant receptor. The chain is Olfactory receptor 1496 (Olr1496) from Rattus norvegicus (Rat).